The following is a 704-amino-acid chain: Elongation factor G (704 aa).

The region spanning 8–290 is the tr-type G domain; the sequence is ARYRNIGISA…AVIEYLPAPT (283 aa). Residues 17–24, 88–92, and 142–145 contribute to the GTP site; these read AHIDAGKT, DTPGH, and NKMD.

This sequence belongs to the TRAFAC class translation factor GTPase superfamily. Classic translation factor GTPase family. EF-G/EF-2 subfamily.

The protein resides in the cytoplasm. Catalyzes the GTP-dependent ribosomal translocation step during translation elongation. During this step, the ribosome changes from the pre-translocational (PRE) to the post-translocational (POST) state as the newly formed A-site-bound peptidyl-tRNA and P-site-bound deacylated tRNA move to the P and E sites, respectively. Catalyzes the coordinated movement of the two tRNA molecules, the mRNA and conformational changes in the ribosome. The sequence is that of Elongation factor G from Proteus mirabilis (strain HI4320).